The chain runs to 200 residues: Probable GTP-binding protein EngB (200 aa).

Residues 22–199 enclose the EngB-type G domain; sequence NVAEVAFLGR…QDKITGYLFG (178 aa). GTP contacts are provided by residues 30–37, 57–61, 85–88, 155–158, and 177–180; these read GRSNVGKS, GKTQL, DLPG, TKID, and FLSN. Mg(2+)-binding residues include Ser37 and Thr59.

Belongs to the TRAFAC class TrmE-Era-EngA-EngB-Septin-like GTPase superfamily. EngB GTPase family. Mg(2+) serves as cofactor.

In terms of biological role, necessary for normal cell division and for the maintenance of normal septation. This is Probable GTP-binding protein EngB from Aliarcobacter butzleri (strain RM4018) (Arcobacter butzleri).